Reading from the N-terminus, the 150-residue chain is Large ribosomal subunit protein uL11 (150 aa).

The protein belongs to the universal ribosomal protein uL11 family. In terms of assembly, part of the ribosomal stalk of the 50S ribosomal subunit. Interacts with L10 and the large rRNA to form the base of the stalk. L10 forms an elongated spine to which L12 dimers bind in a sequential fashion forming a multimeric L10(L12)X complex. One or more lysine residues are methylated.

Functionally, forms part of the ribosomal stalk which helps the ribosome interact with GTP-bound translation factors. The polypeptide is Large ribosomal subunit protein uL11 (Cereibacter sphaeroides (strain KD131 / KCTC 12085) (Rhodobacter sphaeroides)).